Consider the following 322-residue polypeptide: Ferrochelatase (322 aa).

Fe cation contacts are provided by His194 and Glu275.

The protein belongs to the ferrochelatase family.

The protein resides in the cytoplasm. The enzyme catalyses heme b + 2 H(+) = protoporphyrin IX + Fe(2+). The protein operates within porphyrin-containing compound metabolism; protoheme biosynthesis; protoheme from protoporphyrin-IX: step 1/1. In terms of biological role, catalyzes the ferrous insertion into protoporphyrin IX. The chain is Ferrochelatase from Yersinia enterocolitica serotype O:8 / biotype 1B (strain NCTC 13174 / 8081).